The sequence spans 354 residues: Methionine import ATP-binding protein MetN (354 aa).

Residues 8-250 (LDHIDITFRQ…PKEALTQKFI (243 aa)) enclose the ABC transporter domain. ATP is bound at residue 42–49 (GYSGAGKS).

The protein belongs to the ABC transporter superfamily. Methionine importer (TC 3.A.1.24) family. As to quaternary structure, the complex is composed of two ATP-binding proteins (MetN), two transmembrane proteins (MetI) and a solute-binding protein (MetQ).

Its subcellular location is the cell membrane. The enzyme catalyses L-methionine(out) + ATP + H2O = L-methionine(in) + ADP + phosphate + H(+). The catalysed reaction is D-methionine(out) + ATP + H2O = D-methionine(in) + ADP + phosphate + H(+). In terms of biological role, part of the ABC transporter complex MetNIQ involved in methionine import. Responsible for energy coupling to the transport system. The protein is Methionine import ATP-binding protein MetN of Streptococcus pyogenes serotype M6 (strain ATCC BAA-946 / MGAS10394).